We begin with the raw amino-acid sequence, 223 residues long: uncharacterized protein (223 aa).

Residues 5–116 form the Response regulatory domain; that stretch reads RILIVEDDVM…ELLLRMRNML (112 aa). Position 52 is a 4-aspartylphosphate (Asp-52). Positions 121-219 form a DNA-binding region, ompR/PhoB-type; the sequence is GTFTQIKHLY…IYGEGYRLNT (99 aa).

Phosphorylated by YbdK.

It localises to the cytoplasm. Its function is as follows. Member of the two-component regulatory system YbdK/YbdJ. This is an uncharacterized protein from Bacillus subtilis (strain 168).